The following is a 74-amino-acid chain: UPF0154 protein LSL_0542 (74 aa).

The helical transmembrane segment at 5 to 25 threads the bilayer; that stretch reads IWVLIVIIAAVLGFVGGFFAA.

The protein belongs to the UPF0154 family.

It localises to the cell membrane. The chain is UPF0154 protein LSL_0542 from Ligilactobacillus salivarius (strain UCC118) (Lactobacillus salivarius).